Consider the following 328-residue polypeptide: Aryl-hydrocarbon-interacting protein-like 1 (328 aa).

Residues 53–145 form the PPIase FKBP-type domain; sequence KQVGQPMNII…DLDELQKEPQ (93 aa). TPR repeat units follow at residues 178 to 211, 230 to 263, and 264 to 297; these read VPLL…LRNL, NTLI…HPGI, and VKAY…EPSM.

In terms of assembly, interacts with NUB1. As to expression, highly expressed in retina.

Its subcellular location is the cytoplasm. It is found in the nucleus. Its function is as follows. May be important in protein trafficking and/or protein folding and stabilization. In Rattus norvegicus (Rat), this protein is Aryl-hydrocarbon-interacting protein-like 1 (Aipl1).